The following is a 180-amino-acid chain: MANSLVEKYSNEIAPAMNKKFNYDSVMEIPKIDKIVLNMGVGDAVSNAKNLDEAVEELTLISGQKPLITKAKKSIANFRLREGMSIGAKVTLRGDRMYDFLYKLINVSLPRVRDFRGISSRSFDGRGNYTLGIKEQLIFPEIDYDKVNRVRGLDVVIVTTAKTDEEARELLTEFGMPFAK.

This sequence belongs to the universal ribosomal protein uL5 family. Part of the 50S ribosomal subunit; part of the 5S rRNA/L5/L18/L25 subcomplex. Contacts the 5S rRNA and the P site tRNA. Forms a bridge to the 30S subunit in the 70S ribosome.

This is one of the proteins that bind and probably mediate the attachment of the 5S RNA into the large ribosomal subunit, where it forms part of the central protuberance. In the 70S ribosome it contacts protein S13 of the 30S subunit (bridge B1b), connecting the 2 subunits; this bridge is implicated in subunit movement. Contacts the P site tRNA; the 5S rRNA and some of its associated proteins might help stabilize positioning of ribosome-bound tRNAs. This chain is Large ribosomal subunit protein uL5, found in Lactobacillus johnsonii (strain CNCM I-12250 / La1 / NCC 533).